We begin with the raw amino-acid sequence, 84 residues long: Putative membrane protein insertion efficiency factor (84 aa).

It belongs to the UPF0161 family.

It is found in the cell inner membrane. Its function is as follows. Could be involved in insertion of integral membrane proteins into the membrane. In Shewanella halifaxensis (strain HAW-EB4), this protein is Putative membrane protein insertion efficiency factor.